We begin with the raw amino-acid sequence, 393 residues long: Probable acetyl-CoA acyltransferase (393 aa).

Residue Cys-88 is the Acyl-thioester intermediate of the active site. Active-site proton acceptor residues include His-349 and Cys-378.

It belongs to the thiolase-like superfamily. Thiolase family.

It localises to the cytoplasm. The catalysed reaction is 2 acetyl-CoA = acetoacetyl-CoA + CoA. The polypeptide is Probable acetyl-CoA acyltransferase (Staphylococcus aureus (strain COL)).